A 96-amino-acid chain; its full sequence is Co-chaperonin GroES (96 aa).

The protein belongs to the GroES chaperonin family. In terms of assembly, heptamer of 7 subunits arranged in a ring. Interacts with the chaperonin GroEL.

It localises to the cytoplasm. Functionally, together with the chaperonin GroEL, plays an essential role in assisting protein folding. The GroEL-GroES system forms a nano-cage that allows encapsulation of the non-native substrate proteins and provides a physical environment optimized to promote and accelerate protein folding. GroES binds to the apical surface of the GroEL ring, thereby capping the opening of the GroEL channel. This Caulobacter vibrioides (strain ATCC 19089 / CIP 103742 / CB 15) (Caulobacter crescentus) protein is Co-chaperonin GroES.